Reading from the N-terminus, the 151-residue chain is Large ribosomal subunit protein uL13 (151 aa).

It belongs to the universal ribosomal protein uL13 family. As to quaternary structure, part of the 50S ribosomal subunit.

This protein is one of the early assembly proteins of the 50S ribosomal subunit, although it is not seen to bind rRNA by itself. It is important during the early stages of 50S assembly. In Picosynechococcus sp. (strain ATCC 27264 / PCC 7002 / PR-6) (Agmenellum quadruplicatum), this protein is Large ribosomal subunit protein uL13.